The primary structure comprises 471 residues: UDP-N-acetylmuramoylalanine--D-glutamate ligase (471 aa).

ATP is bound at residue 122 to 128; the sequence is GSNAKST.

Belongs to the MurCDEF family.

The protein resides in the cytoplasm. The catalysed reaction is UDP-N-acetyl-alpha-D-muramoyl-L-alanine + D-glutamate + ATP = UDP-N-acetyl-alpha-D-muramoyl-L-alanyl-D-glutamate + ADP + phosphate + H(+). The protein operates within cell wall biogenesis; peptidoglycan biosynthesis. In terms of biological role, cell wall formation. Catalyzes the addition of glutamate to the nucleotide precursor UDP-N-acetylmuramoyl-L-alanine (UMA). This Psychrobacter cryohalolentis (strain ATCC BAA-1226 / DSM 17306 / VKM B-2378 / K5) protein is UDP-N-acetylmuramoylalanine--D-glutamate ligase.